Consider the following 208-residue polypeptide: Imidazoleglycerol-phosphate dehydratase (208 aa).

The interval 1 to 22 (MTRRAAVKAPRAGAAARRGSVA) is disordered. Low complexity predominate over residues 7–19 (VKAPRAGAAARRG).

The protein belongs to the imidazoleglycerol-phosphate dehydratase family.

The protein resides in the cytoplasm. The catalysed reaction is D-erythro-1-(imidazol-4-yl)glycerol 3-phosphate = 3-(imidazol-4-yl)-2-oxopropyl phosphate + H2O. It participates in amino-acid biosynthesis; L-histidine biosynthesis; L-histidine from 5-phospho-alpha-D-ribose 1-diphosphate: step 6/9. The chain is Imidazoleglycerol-phosphate dehydratase from Anaeromyxobacter dehalogenans (strain 2CP-C).